Consider the following 466-residue polypeptide: Adenosylhomocysteinase (466 aa).

3 residues coordinate substrate: T57, D132, and E192. 193-195 (TTT) contributes to the NAD(+) binding site. Substrate-binding residues include K222 and D226. NAD(+)-binding positions include N227, 256–261 (GYGDVG), E279, N314, 335–337 (IGH), and N380.

Belongs to the adenosylhomocysteinase family. Requires NAD(+) as cofactor.

The protein resides in the cytoplasm. It catalyses the reaction S-adenosyl-L-homocysteine + H2O = L-homocysteine + adenosine. The protein operates within amino-acid biosynthesis; L-homocysteine biosynthesis; L-homocysteine from S-adenosyl-L-homocysteine: step 1/1. Its function is as follows. May play a key role in the regulation of the intracellular concentration of adenosylhomocysteine. The polypeptide is Adenosylhomocysteinase (Rhizobium etli (strain ATCC 51251 / DSM 11541 / JCM 21823 / NBRC 15573 / CFN 42)).